Reading from the N-terminus, the 639-residue chain is Tetracycline resistance protein TetO (639 aa).

Residues 1–244 (MKIINLGILA…ASKFYSSTPE (244 aa)) form the tr-type G domain. GTP-binding positions include 10–17 (AHVDAGKT), 74–78 (DTPGH), and 128–131 (NKID).

This sequence belongs to the TRAFAC class translation factor GTPase superfamily. Classic translation factor GTPase family. TetM/TetO subfamily.

Abolishes the inhibitory effect of tetracyclin on protein synthesis by a non-covalent modification of the ribosomes. This is Tetracycline resistance protein TetO (tetO) from Campylobacter jejuni.